The primary structure comprises 391 residues: Saxitoxin and tetrodotoxin-binding protein 1 (391 aa).

Positions methionine 1–alanine 20 are cleaved as a signal peptide. 2 tandem repeats follow at residues proline 24–serine 202 and proline 203–aspartate 391. 7 N-linked (GlcNAc...) asparagine glycosylation sites follow: asparagine 54, asparagine 63, asparagine 97, asparagine 234, asparagine 268, asparagine 277, and asparagine 307.

Homodimer or heterodimer of PSTBP1 and PSTBP2. Glycosylated.

The protein resides in the secreted. Its function is as follows. Binds both saxitoxin and tetradotoxin. May play a role in toxin accumulation and/or excretion. The sequence is that of Saxitoxin and tetrodotoxin-binding protein 1 (psbp1) from Takifugu pardalis (Panther puffer).